Here is a 166-residue protein sequence, read N- to C-terminus: Phosphopantetheine adenylyltransferase (166 aa).

Residue Ser-9 coordinates substrate. ATP contacts are provided by residues 9 to 10 and His-17; that span reads SY. 3 residues coordinate substrate: Lys-41, Ile-75, and Lys-89. ATP-binding positions include 90-92, Glu-100, and 124-130; these read GLR and LEHISSS.

This sequence belongs to the bacterial CoaD family. In terms of assembly, homohexamer. Requires Mg(2+) as cofactor.

The protein localises to the cytoplasm. The enzyme catalyses (R)-4'-phosphopantetheine + ATP + H(+) = 3'-dephospho-CoA + diphosphate. The protein operates within cofactor biosynthesis; coenzyme A biosynthesis; CoA from (R)-pantothenate: step 4/5. Its function is as follows. Reversibly transfers an adenylyl group from ATP to 4'-phosphopantetheine, yielding dephospho-CoA (dPCoA) and pyrophosphate. This Bifidobacterium longum (strain DJO10A) protein is Phosphopantetheine adenylyltransferase.